The chain runs to 459 residues: Sensor histidine kinase SpaK (459 aa).

The Cytoplasmic segment spans residues 1–18; the sequence is MGIGFKGRKTLLRELVKY. The helical transmembrane segment at 19 to 39 threads the bilayer; sequence MVTLCISLVVLALLYIFINTI. The Extracellular portion of the chain corresponds to 40–155; that stretch reads AMNTGFSHPA…RKYLPNYELT (116 aa). The chain crosses the membrane as a helical span at residues 156-176; it reads SICILIILLIIVISIITTYFA. The Cytoplasmic segment spans residues 177-459; the sequence is NRLRKHFETL…VRVKIPLRNE (283 aa). Positions 244 to 458 constitute a Histidine kinase domain; sequence ALAHEIKIPI…EVRVKIPLRN (215 aa). Phosphohistidine; by autocatalysis is present on histidine 247.

The protein localises to the cell membrane. The enzyme catalyses ATP + protein L-histidine = ADP + protein N-phospho-L-histidine.. Functionally, member of the two-component regulatory system SpaK/SpaR involved in the regulation of the biosynthesis of lantibiotic subtilin. SpaK may function as a membrane-associated protein kinase that phosphorylates SpaR in response to environmental signals. This Bacillus subtilis protein is Sensor histidine kinase SpaK (spaK).